A 239-amino-acid polypeptide reads, in one-letter code: SkfA peptide export ATP-binding protein SkfE (239 aa).

The ABC transporter domain occupies 4–232; that stretch reads MQVQNLSKCY…AEWRKEVIRL (229 aa). ATP is bound at residue 36 to 43; the sequence is GPNGAGKT.

The protein belongs to the ABC transporter superfamily. SkfA peptide export (TC 3.A.1.128.1) family.

Its subcellular location is the cell membrane. The enzyme catalyses sulfate(out) + ATP + H2O = sulfate(in) + ADP + phosphate + H(+). It carries out the reaction thiosulfate(out) + ATP + H2O = thiosulfate(in) + ADP + phosphate + H(+). Probably part of the ABC transporter SkfEF involved in the export of the bacteriocin SKF. Probably responsible for energy coupling to the transport system. The sequence is that of SkfA peptide export ATP-binding protein SkfE from Bacillus subtilis (strain 168).